Consider the following 1205-residue polypeptide: PAN2-PAN3 deadenylation complex catalytic subunit Pan2 (1205 aa).

WD repeat units lie at residues 153–193, 195–231, 244–280, and 328–367; these read DESE…QKYA, ETPG…VEHE, VHGN…AITP, and PVGP…SFNP. The segment at 368–484 is linker; sequence YSRETEFALP…PTGREEEPLH (117 aa). Residues 485-924 enclose the USP domain; sequence TVSKKYRKVT…VPAILYYVKR (440 aa). The residue at position 784 (Ser784) is a Phosphoserine. One can recognise an Exonuclease domain in the interval 975 to 1147; sequence VGLDAEFVTL…EDARTALQLY (173 aa). Residues Asp978, Glu980, Asp1087, and Asp1139 each coordinate a divalent metal cation. A disordered region spans residues 1179–1205; that stretch reads WKVPEPESQSSPKSKAGLRPGALGWVG. Residues 1184–1193 are compositionally biased toward low complexity; that stretch reads PESQSSPKSK. Ser1189 is subject to Phosphoserine.

It belongs to the peptidase C19 family. PAN2 subfamily. In terms of assembly, forms a heterotrimer with an asymmetric homodimer of the regulatory subunit PAN3 to form the poly(A)-nuclease (PAN) deadenylation complex. Interacts with PAN3 isoform 1/Pan3L and isoform 3/Pan3S. Interacts with ZFP36. The cofactor is a divalent metal cation.

It is found in the cytoplasm. The protein localises to the P-body. The protein resides in the nucleus. The enzyme catalyses Exonucleolytic cleavage of poly(A) to 5'-AMP.. Positively regulated by the regulatory subunit PAN3. In terms of biological role, catalytic subunit of the poly(A)-nuclease (PAN) deadenylation complex, one of two cytoplasmic mRNA deadenylases involved in general and miRNA-mediated mRNA turnover. PAN specifically shortens poly(A) tails of RNA and the activity is stimulated by poly(A)-binding protein (PABP). PAN deadenylation is followed by rapid degradation of the shortened mRNA tails by the CCR4-NOT complex. Deadenylated mRNAs are then degraded by two alternative mechanisms, namely exosome-mediated 3'-5' exonucleolytic degradation, or deadenylation-dependent mRNA decaping and subsequent 5'-3' exonucleolytic degradation by XRN1. Also acts as an important regulator of the HIF1A-mediated hypoxic response. Required for HIF1A mRNA stability independent of poly(A) tail length regulation. In Rattus norvegicus (Rat), this protein is PAN2-PAN3 deadenylation complex catalytic subunit Pan2.